Here is a 1420-residue protein sequence, read N- to C-terminus: DNA-directed RNA polymerase subunit beta' (1420 aa).

Zn(2+) is bound by residues C71, C73, C86, and C89. Positions 461, 463, and 465 each coordinate Mg(2+). C815, C889, C896, and C899 together coordinate Zn(2+).

This sequence belongs to the RNA polymerase beta' chain family. In terms of assembly, the RNAP catalytic core consists of 2 alpha, 1 beta, 1 beta' and 1 omega subunit. When a sigma factor is associated with the core the holoenzyme is formed, which can initiate transcription. The cofactor is Mg(2+). Zn(2+) is required as a cofactor.

The catalysed reaction is RNA(n) + a ribonucleoside 5'-triphosphate = RNA(n+1) + diphosphate. Its function is as follows. DNA-dependent RNA polymerase catalyzes the transcription of DNA into RNA using the four ribonucleoside triphosphates as substrates. This is DNA-directed RNA polymerase subunit beta' from Histophilus somni (strain 129Pt) (Haemophilus somnus).